The following is an 89-amino-acid chain: Putative regulatory protein Dalk_1931 (89 aa).

This sequence belongs to the RemA family.

This Desulfatibacillum aliphaticivorans protein is Putative regulatory protein Dalk_1931.